A 305-amino-acid chain; its full sequence is Homoserine kinase (305 aa).

An ATP-binding site is contributed by 95-105; that stretch reads PHGRGLGSSSA.

This sequence belongs to the GHMP kinase family. Homoserine kinase subfamily.

The protein resides in the cytoplasm. It catalyses the reaction L-homoserine + ATP = O-phospho-L-homoserine + ADP + H(+). It functions in the pathway amino-acid biosynthesis; L-threonine biosynthesis; L-threonine from L-aspartate: step 4/5. Its function is as follows. Catalyzes the ATP-dependent phosphorylation of L-homoserine to L-homoserine phosphate. The chain is Homoserine kinase from Streptomyces avermitilis (strain ATCC 31267 / DSM 46492 / JCM 5070 / NBRC 14893 / NCIMB 12804 / NRRL 8165 / MA-4680).